The primary structure comprises 217 residues: Protein matrimony (217 aa).

A POLO box domain (PBD)-binding motif is present at residues 39–41 (STP). 2 positions are modified to phosphoserine: serine 63 and serine 66. The tract at residues 83–106 (KQQQQQQHQHCHRTQLKPPPFVLP) is disordered. Residues 157-217 (NHAANVEQIL…NRIMDVLHTL (61 aa)) enclose the SAM domain.

In terms of assembly, interacts with polo. Interacts with cort. Post-translationally, probably ubiquitinated: degraded during the oocyte-to-embryo transition by the anaphase promoting complex/cyclosome (APC/C) containing cort protein.

The protein resides in the nucleus. The protein localises to the chromosome. Functionally, polo kinase inhibitor required to maintain G2 arrest in the meiotic cell cycle in females. Holds heterochromatically paired homologs together from the end of pachytene until metaphase I. Haploinsufficient locus for homologous achiasmate segregation and may be required for the maintenance of heterochromatic pairings. The protein is Protein matrimony of Drosophila melanogaster (Fruit fly).